Reading from the N-terminus, the 147-residue chain is Prefoldin subunit alpha (147 aa).

The protein belongs to the prefoldin alpha subunit family. In terms of assembly, heterohexamer of two alpha and four beta subunits.

It localises to the cytoplasm. Molecular chaperone capable of stabilizing a range of proteins. Seems to fulfill an ATP-independent, HSP70-like function in archaeal de novo protein folding. The sequence is that of Prefoldin subunit alpha from Thermococcus onnurineus (strain NA1).